The primary structure comprises 351 residues: Rod outer segment membrane protein 1 (351 aa).

The Cytoplasmic portion of the chain corresponds to 1–19; it reads MAPVLPLVLPLQPRIRLAQ. The helical transmembrane segment at 20–43 threads the bilayer; sequence GLWLLSWLLVLVGGLTLLCSGHLL. The Lumenal segment spans residues 44–64; the sequence is VQLWHLGTFLAPSCPFSALPQ. The chain crosses the membrane as a helical span at residues 65 to 84; sequence VALAASAVALGTGLVGSGAS. Topologically, residues 85-102 are cytoplasmic; it reads RASLDAEQYPPWRGVLGP. The helical transmembrane segment at 103–125 threads the bilayer; it reads LLVAGTAGGGGLLVLALGLALAL. Topologically, residues 126-264 are lumenal; it reads PGTLDTGLEE…EVLLGHLQGL (139 aa). A helical transmembrane segment spans residues 265-286; the sequence is ASTLGNMLAVTFLLQTLVLLGL. Topologically, residues 287–351 are cytoplasmic; the sequence is RYLQTALEGL…KPPKECLPEA (65 aa). Positions 325–351 are disordered; the sequence is QGAGPHRPAPGETPPEEKPPKECLPEA. The segment covering 339 to 351 has biased composition (basic and acidic residues); sequence PEEKPPKECLPEA.

Belongs to the PRPH2/ROM1 family. As to quaternary structure, homodimer; disulfide-linked. Forms a homotetramer. Forms a heterotetramer with PRPH2. Homotetramer and heterotetramer core complexes go on to form higher order complexes by formation of intermolecular disulfide bonds. Interacts with STX3. Interacts with SNAP25. As to expression, retina photoreceptor (at protein level). In rim region of ROS disks (at protein level).

The protein resides in the photoreceptor inner segment membrane. Its subcellular location is the photoreceptor outer segment membrane. Its function is as follows. Plays a role in rod outer segment (ROS) morphogenesis. May play a role with PRPH2 in the maintenance of the structure of ROS curved disks. Plays a role in the organization of the ROS and maintenance of ROS disk diameter. Involved in the maintenance of the retina outer nuclear layer. This chain is Rod outer segment membrane protein 1 (ROM1), found in Bos taurus (Bovine).